The following is a 237-amino-acid chain: MNQRNMSIINSTPVRVIAIVGCDGSGKSTLTASLVNELAARMPTEHIYLGQSSGRIGEWISQLPVIGAPFGRYLRSKAAHVHEKPSTPPGNITALVIYLLSCWRAYKFRKMLCKSQQGFLLITDRYPQVEVPGFRFDGPQLAKTTGGNGWIKMLRQRELKLYQWMASYLPVLLIRLGIDEQTAFARKPDHQLAALQEKIAVTPQLTFNGAKILELDGRHPADEILQASLRAIHAALS.

An ATP-binding site is contributed by 21-28 (GCDGSGKS).

The protein to E.coli YghR and YghT.

This is an uncharacterized protein from Escherichia coli (strain K12).